The chain runs to 285 residues: Protein HEXIM1 (285 aa).

2 disordered regions span residues 1–56 (MSEV…QNPG) and 132–196 (LMED…LQKD). A compositionally biased stretch (basic and acidic residues) spans 23–36 (GGWHHPVEREEHPV). Residues 168-180 (TDDDLEEEEDEAG) show a composition bias toward acidic residues. Positions 213–284 (SKQDLIKEYL…QEGKQVAADS (72 aa)) form a coiled coil.

The protein belongs to the HEXIM family. Homooligomer and heterooligomer. Core component of the 7SK RNP complex.

It localises to the nucleus. The protein localises to the cytoplasm. Functionally, transcriptional regulator which functions as a general RNA polymerase II transcription inhibitor. Core component of the 7SK RNP complex: in cooperation with 7SK snRNA sequesters P-TEFb in a large inactive 7SK snRNP complex preventing RNA polymerase II phosphorylation and subsequent transcriptional elongation. Plays a role in the regulation of DNA virus-mediated innate immune response by assembling into the HDP-RNP complex, a complex that serves as a platform for IRF3 phosphorylation and subsequent innate immune response activation through the cGAS-STING pathway. This chain is Protein HEXIM1 (hexim1), found in Xenopus laevis (African clawed frog).